Here is a 500-residue protein sequence, read N- to C-terminus: Glycerol kinase (500 aa).

Thr13 is a binding site for ADP. ATP-binding residues include Thr13, Thr14, and Ser15. Thr13 contacts sn-glycerol 3-phosphate. Position 17 (Arg17) interacts with ADP. Residues Arg83, Glu84, Tyr136, and Asp246 each contribute to the sn-glycerol 3-phosphate site. Glycerol contacts are provided by Arg83, Glu84, Tyr136, Asp246, and Gln247. The ADP site is built by Thr268 and Gly311. Positions 268, 311, 315, and 412 each coordinate ATP. ADP-binding residues include Gly412 and Asn416.

It belongs to the FGGY kinase family.

It catalyses the reaction glycerol + ATP = sn-glycerol 3-phosphate + ADP + H(+). It functions in the pathway polyol metabolism; glycerol degradation via glycerol kinase pathway; sn-glycerol 3-phosphate from glycerol: step 1/1. Its activity is regulated as follows. Inhibited by fructose 1,6-bisphosphate (FBP). In terms of biological role, key enzyme in the regulation of glycerol uptake and metabolism. Catalyzes the phosphorylation of glycerol to yield sn-glycerol 3-phosphate. In Francisella tularensis subsp. novicida (strain U112), this protein is Glycerol kinase.